The sequence spans 303 residues: Thyrotroph embryonic factor (303 aa).

Disordered stretches follow at residues 1 to 63 and 132 to 176; these read MSDA…KLEE and ESAS…DPNC. Phosphoserine is present on Ser32. Residues 41–61 are compositionally biased toward basic and acidic residues; the sequence is KLMENPPREARLDKEKGKEKL. The span at 133 to 160 shows a compositional bias: low complexity; it reads SASSSTASPPSSSTAIFQPSETVSSTES. A bZIP domain is found at 233–296; sequence DEKYWTRRKK…GKCKTIVSKY (64 aa). Residues 235-255 form a basic motif region; the sequence is KYWTRRKKNNVAAKRSRDARR. The leucine-zipper stretch occupies residues 256-263; sequence LKENQITI.

This sequence belongs to the bZIP family. PAR subfamily. As to quaternary structure, binds DNA as a homodimer or a heterodimer. Can form a heterodimer with DBP.

It localises to the nucleus. In terms of biological role, transcription factor that binds to and transactivates the TSHB promoter. Binds to a minimal DNA-binding sequence 5'-[TC][AG][AG]TTA[TC][AG]-3'. In Homo sapiens (Human), this protein is Thyrotroph embryonic factor (TEF).